A 560-amino-acid polypeptide reads, in one-letter code: uncharacterized protein (560 aa).

5 helical membrane-spanning segments follow: residues 9–29 (LVIT…SFLL), 61–81 (ILVP…KYKI), 136–156 (IGIA…ASMM), 305–325 (SLQI…ASFI), and 442–462 (VVLE…TNFY).

It is found in the membrane. This is an uncharacterized protein from Saccharomyces cerevisiae (strain ATCC 204508 / S288c) (Baker's yeast).